A 410-amino-acid polypeptide reads, in one-letter code: LanC-like protein GCR2 (410 aa).

3 residues coordinate Zn(2+): cysteine 283, cysteine 328, and histidine 329.

This sequence belongs to the LanC-like protein family. In terms of assembly, may interact (via C-terminus) with GPA1.

May play a role in abscisic acid (ABA) signaling. This is LanC-like protein GCR2 (GCR2) from Arabidopsis thaliana (Mouse-ear cress).